The following is an 86-amino-acid chain: Small ribosomal subunit protein uS17 (86 aa).

Belongs to the universal ribosomal protein uS17 family. As to quaternary structure, part of the 30S ribosomal subunit.

Functionally, one of the primary rRNA binding proteins, it binds specifically to the 5'-end of 16S ribosomal RNA. This is Small ribosomal subunit protein uS17 from Helicobacter pylori (strain P12).